Consider the following 606-residue polypeptide: DNA mismatch repair protein MutL (606 aa).

Residues 377 to 401 (HRPLFAPQPAPQPDREPPLPDSGSR) are disordered.

It belongs to the DNA mismatch repair MutL/HexB family.

Functionally, this protein is involved in the repair of mismatches in DNA. It is required for dam-dependent methyl-directed DNA mismatch repair. May act as a 'molecular matchmaker', a protein that promotes the formation of a stable complex between two or more DNA-binding proteins in an ATP-dependent manner without itself being part of a final effector complex. This Geobacter sulfurreducens (strain ATCC 51573 / DSM 12127 / PCA) protein is DNA mismatch repair protein MutL.